Consider the following 352-residue polypeptide: Phosphoribosylformylglycinamidine cyclo-ligase (352 aa).

This sequence belongs to the AIR synthase family.

Its subcellular location is the cytoplasm. It catalyses the reaction 2-formamido-N(1)-(5-O-phospho-beta-D-ribosyl)acetamidine + ATP = 5-amino-1-(5-phospho-beta-D-ribosyl)imidazole + ADP + phosphate + H(+). It participates in purine metabolism; IMP biosynthesis via de novo pathway; 5-amino-1-(5-phospho-D-ribosyl)imidazole from N(2)-formyl-N(1)-(5-phospho-D-ribosyl)glycinamide: step 2/2. The sequence is that of Phosphoribosylformylglycinamidine cyclo-ligase from Pseudomonas putida (strain GB-1).